The sequence spans 248 residues: Large ribosomal subunit protein uL4 (248 aa).

The disordered stretch occupies residues 69–92; it reads HVPRLKNGSRAAKVPQAKGGREAH.

The protein belongs to the universal ribosomal protein uL4 family. Part of the 50S ribosomal subunit.

Its function is as follows. One of the primary rRNA binding proteins, this protein initially binds near the 5'-end of the 23S rRNA. It is important during the early stages of 50S assembly. It makes multiple contacts with different domains of the 23S rRNA in the assembled 50S subunit and ribosome. In terms of biological role, forms part of the polypeptide exit tunnel. In Methanoregula boonei (strain DSM 21154 / JCM 14090 / 6A8), this protein is Large ribosomal subunit protein uL4.